The following is a 370-amino-acid chain: Vasopressin V2 receptor (370 aa).

The span at 1-10 (MLLASTTSAV) shows a compositional bias: polar residues. A disordered region spans residues 1–26 (MLLASTTSAVPRTLSPPTPAGNGSRE). The Extracellular segment spans residues 1-37 (MLLASTTSAVPRTLSPPTPAGNGSRELLDTRDPLLVQ). An N-linked (GlcNAc...) asparagine glycan is attached at Asn22. The chain crosses the membrane as a helical span at residues 38 to 62 (AELALLSTVFVAVALSNGLVLGALA). Over 63–76 (RRVRRGRWAPMHVF) the chain is Cytoplasmic. A helical membrane pass occupies residues 77–97 (IGHLCLADLAVALFQVLPQLA). The Extracellular segment spans residues 98–112 (WDATDRFRGPDALCR). The helical transmembrane segment at 113–134 (AVKYLQMVGMYASSYMILAMTL) threads the bilayer. The Cytoplasmic segment spans residues 135-158 (DRHRAICRPMLAYRHGGGARWNRP). A helical membrane pass occupies residues 159-179 (VLVAWAFSLILSLPQLFIFAQ). Over 180–199 (RDVGNGSGVLDCWAHFAEPW) the chain is Extracellular. Residues 200–219 (GLRAYVTWIALMVFVAPALG) form a helical membrane-spanning segment. Residues 220-270 (IAACQVLIFREIHSSLVPGPAERAGGCRGGHRTGSPSEGARVSAAMAKTVR) are Cytoplasmic-facing. A helical membrane pass occupies residues 271–292 (MTLVIVIVYVLCWAPFFLVQLW). Topologically, residues 293–307 (AAWDPQAPLEGAPFV) are extracellular. A helical transmembrane segment spans residues 308-327 (LLMLLASLNSCTNPWIYAFF). Over 328 to 370 (SSSVSSELRSLFCWARSRAPPSLGPQEESCATASSFLAKDTSS) the chain is Cytoplasmic. Cys340 carries the S-palmitoyl cysteine lipid modification.

The protein belongs to the G-protein coupled receptor 1 family. Vasopressin/oxytocin receptor subfamily. As to quaternary structure, interacts with ARRDC4. Identified in a complex containing at least ARRDC4, V2R and HGS. Interacts with TMEM147.

It localises to the cell membrane. In terms of biological role, receptor for arginine vasopressin. The activity of this receptor is mediated by G proteins which activate adenylate cyclase. Involved in renal water reabsorption. The sequence is that of Vasopressin V2 receptor (AVPR2) from Canis lupus familiaris (Dog).